A 282-amino-acid chain; its full sequence is 2-dehydro-3-deoxyphosphooctonate aldolase (282 aa).

It belongs to the KdsA family.

The protein localises to the cytoplasm. The enzyme catalyses D-arabinose 5-phosphate + phosphoenolpyruvate + H2O = 3-deoxy-alpha-D-manno-2-octulosonate-8-phosphate + phosphate. The protein operates within carbohydrate biosynthesis; 3-deoxy-D-manno-octulosonate biosynthesis; 3-deoxy-D-manno-octulosonate from D-ribulose 5-phosphate: step 2/3. Its pathway is bacterial outer membrane biogenesis; lipopolysaccharide biosynthesis. The chain is 2-dehydro-3-deoxyphosphooctonate aldolase from Chromobacterium violaceum (strain ATCC 12472 / DSM 30191 / JCM 1249 / CCUG 213 / NBRC 12614 / NCIMB 9131 / NCTC 9757 / MK).